Here is a 758-residue protein sequence, read N- to C-terminus: Long-chain-alcohol oxidase FAO1 (758 aa).

Helical transmembrane passes span 102–122 (IVLRILTFRLGTLLLCGLVCL) and 155–175 (PLARIGFMMIKAIFLFYYFTW). Residue 246-261 (CDAVVVGSGCGGGVAA) coordinates FAD. The Proton acceptor role is filled by His-689.

Belongs to the GMC oxidoreductase family.

The protein resides in the membrane. It catalyses the reaction a long-chain primary fatty alcohol + O2 = a long-chain fatty aldehyde + H2O2. Functionally, long-chain fatty alcohol oxidase involved in the omega-oxidation pathway of lipid degradation. This is Long-chain-alcohol oxidase FAO1 (FAO1) from Arabidopsis thaliana (Mouse-ear cress).